The sequence spans 128 residues: MPKRAIIPAGSGVPLAPFVPGTLADGVLYVSGTLPFDKDNNVVHVGDAAAQTRHVLEIIKSVIETAGGSMDDVTMNSIFITDWANYGAVNQVYAEYFPGEKPARFCIQCGLVKPDALIEIASIAHLGK.

The protein belongs to the RutC family.

It carries out the reaction (Z)-3-aminoacrylate + H2O + H(+) = 3-oxopropanoate + NH4(+). Involved in pyrimidine catabolism. Catalyzes the deamination of 3-aminoacrylate to malonic semialdehyde, a reaction that can also occur spontaneously. RutC may facilitate the reaction and modulate the metabolic fitness, rather than catalyzing essential functions. The protein is 3-aminoacrylate deaminase RutC of Pantoea ananatis (strain LMG 20103).